The following is a 264-amino-acid chain: 3-deoxy-manno-octulosonate cytidylyltransferase (264 aa).

It belongs to the KdsB family.

The protein localises to the cytoplasm. It catalyses the reaction 3-deoxy-alpha-D-manno-oct-2-ulosonate + CTP = CMP-3-deoxy-beta-D-manno-octulosonate + diphosphate. It functions in the pathway nucleotide-sugar biosynthesis; CMP-3-deoxy-D-manno-octulosonate biosynthesis; CMP-3-deoxy-D-manno-octulosonate from 3-deoxy-D-manno-octulosonate and CTP: step 1/1. Its pathway is bacterial outer membrane biogenesis; lipopolysaccharide biosynthesis. Functionally, activates KDO (a required 8-carbon sugar) for incorporation into bacterial lipopolysaccharide in Gram-negative bacteria. This chain is 3-deoxy-manno-octulosonate cytidylyltransferase, found in Methylibium petroleiphilum (strain ATCC BAA-1232 / LMG 22953 / PM1).